Here is an 85-residue protein sequence, read N- to C-terminus: Toxin Cll5c* (85 aa).

An N-terminal signal peptide occupies residues M1–A17. Residues K18–S83 form the LCN-type CS-alpha/beta domain. 4 disulfides stabilise this stretch: C29/C82, C33/C58, C42/C63, and C46/C65. Residues K84–K85 constitute a propeptide, removed by a carboxypeptidase.

The protein belongs to the long (4 C-C) scorpion toxin superfamily. Sodium channel inhibitor family. Beta subfamily. In terms of tissue distribution, expressed by the venom gland.

The protein localises to the secreted. Beta toxins bind voltage-independently at site-4 of sodium channels (Nav) and shift the voltage of activation toward more negative potentials thereby affecting sodium channel activation and promoting spontaneous and repetitive firing. This chain is Toxin Cll5c*, found in Centruroides limpidus (Mexican scorpion).